The following is a 250-amino-acid chain: DSC E3 ubiquitin ligase complex subunit 3 (250 aa).

Residues 105 to 130 (LASQDQAQSGLNSNSESPDDLQNAQT) form a disordered region. Polar residues predominate over residues 107-130 (SQDQAQSGLNSNSESPDDLQNAQT). N-linked (GlcNAc...) asparagine glycosylation is present at asparagine 187. 2 helical membrane-spanning segments follow: residues 199–219 (TLLA…YFLW) and 228–248 (MQLS…LHSY).

This sequence belongs to the dsc3 family. In terms of assembly, component of the DSC E3 ubiquitin ligase complex composed of dsc1, dsc2, dsc3 and dsc4.

The protein resides in the endoplasmic reticulum membrane. Its subcellular location is the golgi apparatus membrane. It participates in protein modification; protein ubiquitination. Its function is as follows. Component of the DSC E3 ubiquitin ligase complex which is required for the sre1 transcriptional activator proteolytic cleavage to release the soluble transcription factor from the membrane in low oxygen or sterol conditions. The complex also plays an important role in the multivesicular body (MVB) pathway and functions in a post-endoplasmic reticulum pathway for protein degradation. The sequence is that of DSC E3 ubiquitin ligase complex subunit 3 (dsc3) from Schizosaccharomyces pombe (strain 972 / ATCC 24843) (Fission yeast).